The primary structure comprises 1944 residues: MEPSKFHSTVLARPPGMYDEDDDHRRRQRDILNPPAPSQTGPGSGGSSSAGGPRPPFSLRSPTQSEFHHQSSQHHYSASSAASGPQSTYNGANNGVPQSHSHSRSNSHSRHSSSSVLHSPYQQASTASRPAHALDLHRSPQTSGLQAPQRSPGLHAPSVYYSQESREHHPPPPKPIDKPASSGRSFYDPLTDTTTTSTSDRERRTSDAGSSWHNATTNAVSTPTHRDAYNSYSKPAANPSPYYGNGKYTSPSASIYPPRSPASHPQSVATAAAEPISPPTRPPRMATPNILNPTTTSSMAAMSQAESPAQKAAVPAATPSRAAELMSFSNILSSSEPAPKPRPRSPVLAETPNKQPEPEPEREPTKEPSKEPSKEPSKEPSKEPSPPPADMDETSDSPACPEKPAEVDAETEPDAEIHDDVDTVDGLEESEKPEPPIKREKSAKVEKAPRRPRVVEKEKKERVTKAPRKSAGAKGRASEVKAESTPKQSRRSSGKQEALSSSRVPAKRQANGLTKQKAQALEQEKAVVAEMEQLEEEALDESEARAELRAFKKRKLNRQKALETTDLSVATELLPSLKDEAINRHHRRHDFSAEMVLKLGVHVALGRLRFGDHNYDAALKEVREQELFAEKERKKDMQRKRRREKSMAVTIEQKEAALAKAHATEDKLERQKLLREAERANKKAQQTKLILQKGIKGPARNIMPMDVNLEGGSMATFSADSMEPGKGKGKGRAGNRPKKSKEQKQAEKEAAEAAQAALDAGQELPSKEENPKIRIKVNKGKLSKDKDRDVDVDTIDGDNTEIKDTEEPPPKKKGKVVEEVKDTLETRFQSKGYNQIYDQIWRDMARKDVSKVYRLATDSYYTKASNLKKTAILAAKEAKRWQLRTNKGMKDLQARGKRVMRDMMTFWKRNEREERDLRKAAERQELENARKEEADREAARQKRKLNFLISQTELYSHFIGKKIKTDEVERSTDRPEVAAEEQKNKPAGENALTVKEPTGPVGAKVTNFENLDFDAEDDETLQAAAMANAQNAIAEAQRKARNFNNDDEPDEDGEMNFQNPTGLGDVEIEQPKLLTATLKEYQLKGLNWLVNLYEQGINGILADEMGLGKTIQSISVMAYLAEHHDIWGPFLVVAPASTLHNWEQEIKRFVPDLKIVPYWGSASDRKILRKFWDRKHSTYKRDAQFHVAITSYQMVVSDVAYFQKMKWQYMILDEAQAIKSSQSSRWKCLLSFHCRNRLLLTGTPIQNNMQELWALLHFIMPSLFDSHEEFSDWFSKDIESHAQSNSKLNEDQLKRLHMILKPFMLRRVKKHVQKELGDKIELDVYCDLTYRQRAYYANLRNQISIMDLIEKATLGDDNDSGTLMNLVMQFRKVCNHPDLFERADTSSPLALVRFAETGSFAREGNDVTVGYTTRSVVEYILPRLLWRDGGRLTKAGSDNPSAGFRSRYLGEMMNIWSSTNIRESVDGTDNFSFLRFADTSIAEAEKVGKTDLFARASELAQRRNRLANMHVSYDDDEEDNFTPAHALFLIRQRQDRTALSEITSEGALQNLMNVSHVMYEDANLPRMDQAARPGASAPPIEVVCHTSSTQIERDRVLFNVPMRKALFGPNLDEQKEFVLQKVPVEQLPPAPLLPKPDNERQRFTSITVPSMRQFITNSGKLAKLDELLFKLKAGGHRVLLYFQMTRMIDLMEEYLTYRNWKYCRLDGSTKFEDRRDTVHDFQTNPSIFVFLLSTRAGGLGINLTSADTVIFYDSDWNPTIDSQAMDRAHRLGQTRQVTVYRLITRGTIEERIRKRAMQKEEVQRVVITGGAGASSGVDFSGRRAPENRNRDIAMWLADDDQAELIERRERELLESGELDKVAKKRGGGKRKKVAKDMGDGGGVSLDEMYHEGEGNFDDNKLSGAATPNVPDSTDAKPGKKKKATGKKAKTTKQRLAIADGQMDM.

The tract at residues 1 to 518 is disordered; the sequence is MEPSKFHSTV…QANGLTKQKA (518 aa). Residues 73–83 show a composition bias toward low complexity; the sequence is QHHYSASSAAS. A compositionally biased stretch (polar residues) spans 84–98; sequence GPQSTYNGANNGVPQ. The segment covering 101 to 111 has biased composition (basic residues); that stretch reads SHSRSNSHSRH. Polar residues-rich tracts occupy residues 139–149, 208–223, and 289–307; these read SPQTSGLQAPQ, AGSSWHNATTNAVSTP, and NILNPTTTSSMAAMSQAES. Positions 312–323 are enriched in low complexity; it reads AAVPAATPSRAA. Residues 327–336 are compositionally biased toward polar residues; it reads SFSNILSSSE. 2 stretches are compositionally biased toward basic and acidic residues: residues 356 to 382 and 429 to 464; these read PEPEPEREPTKEPSKEPSKEPSKEPSK and ESEKPEPPIKREKSAKVEKAPRRPRVVEKEKKERVT. Coiled-coil stretches lie at residues 506–563 and 624–696; these read AKRQ…KALE and EQEL…KGIK. A disordered region spans residues 715 to 815; that stretch reads ATFSADSMEP…EEPPPKKKGK (101 aa). The segment covering 727–739 has biased composition (basic residues); sequence GKGKGRAGNRPKK. 3 stretches are compositionally biased toward basic and acidic residues: residues 740–751, 782–791, and 800–815; these read SKEQKQAEKEAA, LSKDKDRDVD, and TEIKDTEEPPPKKKGK. Positions 840-965 constitute a DBINO domain; that stretch reads IWRDMARKDV…SHFIGKKIKT (126 aa). Residues 908 to 953 adopt a coiled-coil conformation; that stretch reads KRNEREERDLRKAAERQELENARKEEADREAARQKRKLNFLISQTE. Positions 966–986 are enriched in basic and acidic residues; that stretch reads DEVERSTDRPEVAAEEQKNKP. A disordered region spans residues 966 to 1003; it reads DEVERSTDRPEVAAEEQKNKPAGENALTVKEPTGPVGA. The 173-residue stretch at 1090 to 1262 folds into the Helicase ATP-binding domain; sequence VNLYEQGING…WALLHFIMPS (173 aa). ATP is bound at residue 1103 to 1110; it reads DEMGLGKT. The DEAQ box motif lies at 1213–1216; sequence DEAQ. Positions 1663-1818 constitute a Helicase C-terminal domain; it reads KLDELLFKLK…GGAGASSGVD (156 aa). Basic residues predominate over residues 1862-1873; sequence AKKRGGGKRKKV. The segment at 1862–1944 is disordered; that stretch reads AKKRGGGKRK…LAIADGQMDM (83 aa). Basic and acidic residues predominate over residues 1887–1900; sequence EMYHEGEGNFDDNK. The span at 1918–1932 shows a compositional bias: basic residues; the sequence is GKKKKATGKKAKTTK.

This sequence belongs to the SNF2/RAD54 helicase family. Component of the INO80 chromatin-remodeling complex.

Its subcellular location is the nucleus. It catalyses the reaction ATP + H2O = ADP + phosphate + H(+). Functionally, ATPase component of the INO80 complex which remodels chromatin by shifting nucleosomes and is involved in DNA repair. The sequence is that of Chromatin-remodeling ATPase INO80 (INO80) from Pyricularia oryzae (strain 70-15 / ATCC MYA-4617 / FGSC 8958) (Rice blast fungus).